Here is a 123-residue protein sequence, read N- to C-terminus: Ribosome-binding factor A (123 aa).

This sequence belongs to the RbfA family. As to quaternary structure, monomer. Binds 30S ribosomal subunits, but not 50S ribosomal subunits or 70S ribosomes.

Its subcellular location is the cytoplasm. Its function is as follows. One of several proteins that assist in the late maturation steps of the functional core of the 30S ribosomal subunit. Associates with free 30S ribosomal subunits (but not with 30S subunits that are part of 70S ribosomes or polysomes). Required for efficient processing of 16S rRNA. May interact with the 5'-terminal helix region of 16S rRNA. This Rickettsia bellii (strain OSU 85-389) protein is Ribosome-binding factor A.